The following is a 278-amino-acid chain: MSFRARLLAAERLNDSLLCVGLDPEPSKFPAPWTGDATRIFDFCARIVDATKDLVIAFKPQIAYFAAHRAEDQLERLMAYLRRVAPDVPVILDAKRGDIGSTAEQYAREAFERYQADAVTLSPFMGFDSVEPYLRWPGKGAILLCRTSNPGGSDLQNQRLADVDGTPRLYEHLAQLAQGPWNTNGQLGLVVGATFPEELARVRALAPTLPLLIPGVGAQGGDAAATVKAAWRGDKATTSAPIIVNSSRAVLYAGRDAEFASAARQVALATRAALNAAR.

The active-site Proton donor is the Lys95.

The protein belongs to the OMP decarboxylase family. Type 2 subfamily.

The enzyme catalyses orotidine 5'-phosphate + H(+) = UMP + CO2. Its pathway is pyrimidine metabolism; UMP biosynthesis via de novo pathway; UMP from orotate: step 2/2. This Methylibium petroleiphilum (strain ATCC BAA-1232 / LMG 22953 / PM1) protein is Orotidine 5'-phosphate decarboxylase.